Here is a 280-residue protein sequence, read N- to C-terminus: Dopamine receptor-interacting protein 1 (280 aa).

As to quaternary structure, interacts with DRD1, the dopamine D1 receptor.

In terms of biological role, could be a regulator of the dopamine receptor signaling pathway. The polypeptide is Dopamine receptor-interacting protein 1 (DORIP1) (Bos taurus (Bovine)).